A 1375-amino-acid polypeptide reads, in one-letter code: DNA-directed RNA polymerase subunit beta' (1375 aa).

The interval Met-1–Arg-158 is unknown. Residues Lys-159–Ile-1353 form a DNA-directed RNA polymerase subunit beta' region. Residues Cys-219, Cys-221, Cys-233, and Cys-236 each contribute to the Zn(2+) site. 3 residues coordinate Mg(2+): Asp-607, Asp-609, and Asp-611.

It belongs to the RNA polymerase beta' chain family. As to quaternary structure, the RNAP catalytic core consists of 2 alpha, 1 beta, 1 beta' and 1 omega subunit. When a sigma factor is associated with the core the holoenzyme is formed, which can initiate transcription. Requires Mg(2+) as cofactor. Zn(2+) is required as a cofactor.

The enzyme catalyses RNA(n) + a ribonucleoside 5'-triphosphate = RNA(n+1) + diphosphate. Functionally, DNA-dependent RNA polymerase catalyzes the transcription of DNA into RNA using the four ribonucleoside triphosphates as substrates. In Acholeplasma laidlawii (strain PG-8A), this protein is DNA-directed RNA polymerase subunit beta'.